Here is a 362-residue protein sequence, read N- to C-terminus: Heat-inducible transcription repressor HrcA (362 aa).

Belongs to the HrcA family.

In terms of biological role, negative regulator of class I heat shock genes (grpE-dnaK-dnaJ and groELS operons). Prevents heat-shock induction of these operons. This Bradyrhizobium sp. (strain BTAi1 / ATCC BAA-1182) protein is Heat-inducible transcription repressor HrcA.